The sequence spans 293 residues: Elongation factor Ts (293 aa).

Residues 80–83 form an involved in Mg(2+) ion dislocation from EF-Tu region; the sequence is TDFV.

It belongs to the EF-Ts family.

It localises to the cytoplasm. Functionally, associates with the EF-Tu.GDP complex and induces the exchange of GDP to GTP. It remains bound to the aminoacyl-tRNA.EF-Tu.GTP complex up to the GTP hydrolysis stage on the ribosome. The protein is Elongation factor Ts of Paraburkholderia phytofirmans (strain DSM 17436 / LMG 22146 / PsJN) (Burkholderia phytofirmans).